A 946-amino-acid polypeptide reads, in one-letter code: Bifunctional glutamine synthetase adenylyltransferase/adenylyl-removing enzyme (946 aa).

Residues 1 to 440 (MKPLSSPLQQ…VFNELIGDDE (440 aa)) form an adenylyl removase region. Positions 449–946 (SEQWRELWQD…ASWQKWLVEE (498 aa)) are adenylyl transferase.

This sequence belongs to the GlnE family. The cofactor is Mg(2+).

It catalyses the reaction [glutamine synthetase]-O(4)-(5'-adenylyl)-L-tyrosine + phosphate = [glutamine synthetase]-L-tyrosine + ADP. The enzyme catalyses [glutamine synthetase]-L-tyrosine + ATP = [glutamine synthetase]-O(4)-(5'-adenylyl)-L-tyrosine + diphosphate. Its function is as follows. Involved in the regulation of glutamine synthetase GlnA, a key enzyme in the process to assimilate ammonia. When cellular nitrogen levels are high, the C-terminal adenylyl transferase (AT) inactivates GlnA by covalent transfer of an adenylyl group from ATP to specific tyrosine residue of GlnA, thus reducing its activity. Conversely, when nitrogen levels are low, the N-terminal adenylyl removase (AR) activates GlnA by removing the adenylyl group by phosphorolysis, increasing its activity. The regulatory region of GlnE binds the signal transduction protein PII (GlnB) which indicates the nitrogen status of the cell. In Shigella boydii serotype 18 (strain CDC 3083-94 / BS512), this protein is Bifunctional glutamine synthetase adenylyltransferase/adenylyl-removing enzyme.